Here is a 426-residue protein sequence, read N- to C-terminus: Formate-dependent phosphoribosylglycinamide formyltransferase (426 aa).

Residues 26–27 (EL) and E86 each bind N(1)-(5-phospho-beta-D-ribosyl)glycinamide. ATP-binding positions include R118, K158, 197-200 (EEFI), and E205. The region spanning 123–324 (EAIASTGART…EFALHAKAVL (202 aa)) is the ATP-grasp domain. Mg(2+) is bound by residues E279 and E293. N(1)-(5-phospho-beta-D-ribosyl)glycinamide is bound by residues D300, K374, and 381–382 (RR).

It belongs to the PurK/PurT family. As to quaternary structure, homodimer.

It catalyses the reaction N(1)-(5-phospho-beta-D-ribosyl)glycinamide + formate + ATP = N(2)-formyl-N(1)-(5-phospho-beta-D-ribosyl)glycinamide + ADP + phosphate + H(+). Its pathway is purine metabolism; IMP biosynthesis via de novo pathway; N(2)-formyl-N(1)-(5-phospho-D-ribosyl)glycinamide from N(1)-(5-phospho-D-ribosyl)glycinamide (formate route): step 1/1. Involved in the de novo purine biosynthesis. Catalyzes the transfer of formate to 5-phospho-ribosyl-glycinamide (GAR), producing 5-phospho-ribosyl-N-formylglycinamide (FGAR). Formate is provided by PurU via hydrolysis of 10-formyl-tetrahydrofolate. This is Formate-dependent phosphoribosylglycinamide formyltransferase from Methanocella arvoryzae (strain DSM 22066 / NBRC 105507 / MRE50).